We begin with the raw amino-acid sequence, 85 residues long: Putative membrane protein insertion efficiency factor (85 aa).

Belongs to the UPF0161 family.

Its subcellular location is the cell inner membrane. Functionally, could be involved in insertion of integral membrane proteins into the membrane. The protein is Putative membrane protein insertion efficiency factor of Phenylobacterium zucineum (strain HLK1).